Reading from the N-terminus, the 931-residue chain is Aftiphilin (931 aa).

The segment at 1 to 49 is disordered; it reads MEPDIIRMYSSSPPPLDNGAEDDEEDEFGEFGGFSEVSPSGVGFVDFDT. Over residues 19 to 29 the composition is skewed to acidic residues; the sequence is GAEDDEEDEFG. Positions 28–31 match the WXXF motif 1 motif; it reads FGEF. Residues 33-45 are compositionally biased toward low complexity; sequence GFSEVSPSGVGFV. Ser-151 is modified (phosphoserine). A compositionally biased stretch (polar residues) spans 371-381; that stretch reads SVKTSDVNEIG. The segment at 371 to 454 is disordered; it reads SVKTSDVNEI…PFVTSTQDSM (84 aa). Residue Ser-395 is modified to Phosphoserine. A WXXF motif 2 motif is present at residues 433 to 436; that stretch reads FGDF. Over residues 439 to 454 the composition is skewed to polar residues; it reads ANGTTPPFVTSTQDSM. The WXXF motif 3 signature appears at 476 to 479; that stretch reads FGEF. 2 disordered regions span residues 494–561 and 599–636; these read TESD…SSAG and WQSQRTDETMGTLGTPKMHSVSSAASKGAVASGHLQEP. Residues 516–530 show a composition bias toward basic and acidic residues; the sequence is GGKDSKPDSKLKNGQ. Thr-613 carries the post-translational modification Phosphothreonine. Over residues 618-631 the composition is skewed to low complexity; the sequence is SVSSAASKGAVASG. The short motif at 712–714 is the CLTCL1/Clathrin-binding element; that stretch reads YQW. Positions 821–825 are clathrin-binding; it reads LLNLD.

As to quaternary structure, self-associates. Interacts with GGA1 (via GAE domain). Interacts with GGA3 (via GAE domain), AP1G1 (via GAE domain) and AP1G2 (via GAE domain). Component of the aftiphilin/p200/gamma-synergin complex, at least composed of AFTPH/aftiphilin, HEATR5B/p200a and SYNRG/gamma-synergin, which plays a role in the AP1G1/AP-1-mediated protein trafficking from early to recycling endosomes. Within the complex interacts with HEATR5B/p200a and SYNRG/gamma-synergin; the interactions are direct. Interacts with AP1G1/AP-1; the interaction is required to recruit AFTPH/aftiphilin to the perinuclear region of the cell. Interacts with CLTCL1/Clathrin.

The protein localises to the cytoplasm. It localises to the perinuclear region. It is found in the cytoplasmic vesicle. The protein resides in the clathrin-coated vesicle. Functionally, component of clathrin-coated vesicles. Component of the aftiphilin/p200/gamma-synergin complex, which plays roles in AP1G1/AP-1-mediated protein trafficking including the trafficking of transferrin from early to recycling endosomes, and the membrane trafficking of furin and the lysosomal enzyme cathepsin D between the trans-Golgi network (TGN) and endosomes. The protein is Aftiphilin (Aftph) of Mus musculus (Mouse).